The chain runs to 347 residues: Nod factor export ATP-binding protein I (347 aa).

Residues 1 to 11 (MGENMEREMLR) are compositionally biased toward basic and acidic residues. Residues 1 to 32 (MGENMEREMLRPKTIAMDQNSASARSNPEREI) form a disordered region. Residues 17–26 (MDQNSASARS) show a composition bias toward polar residues. Residues 49–279 (IDLQAVTMIY…IIGCPVIEVY (231 aa)) form the ABC transporter domain. 81-88 (GPNGAGKS) is a binding site for ATP.

Belongs to the ABC transporter superfamily. Lipooligosaccharide exporter (TC 3.A.1.102) family. The complex is composed of two ATP-binding proteins (NodI) and two transmembrane proteins (NodJ).

The protein localises to the cell inner membrane. Part of the ABC transporter complex NodIJ involved in the export of the nodulation factors (Nod factors), the bacterial signal molecules that induce symbiosis and subsequent nodulation induction. Nod factors are LCO (lipo-chitin oligosaccharide), a modified beta-1,4-linked N-acetylglucosamine oligosaccharide. This subunit is responsible for energy coupling to the transport system. The sequence is that of Nod factor export ATP-binding protein I from Neorhizobium galegae (Rhizobium galegae).